We begin with the raw amino-acid sequence, 225 residues long: Small ribosomal subunit protein uS2 (225 aa).

Basic and acidic residues predominate over residues 1–13 (MAEAKPALEKEAA). The disordered stretch occupies residues 1–33 (MAEAKPALEKEAAVKTGSIPSESEDETASHKEG).

It belongs to the universal ribosomal protein uS2 family.

This chain is Small ribosomal subunit protein uS2, found in Methanosarcina acetivorans (strain ATCC 35395 / DSM 2834 / JCM 12185 / C2A).